Reading from the N-terminus, the 491-residue chain is Ketol-acid reductoisomerase (NADP(+)) (491 aa).

Residues 15–208 (AQLGKCRFMG…GGHRAGVLES (194 aa)) enclose the KARI N-terminal Rossmann domain. NADP(+) is bound by residues 45–48 (CGAQ), Arg-68, Arg-76, Ser-78, and 108–110 (DKQ). The active site involves His-132. An NADP(+)-binding site is contributed by Gly-158. KARI C-terminal knotted domains are found at residues 209–344 (SFVA…TAPQ) and 345–484 (YEGK…MTDM). The Mg(2+) site is built by Asp-217, Glu-221, Glu-389, and Glu-393. Ser-414 is a binding site for substrate.

The protein belongs to the ketol-acid reductoisomerase family. It depends on Mg(2+) as a cofactor.

It carries out the reaction (2R)-2,3-dihydroxy-3-methylbutanoate + NADP(+) = (2S)-2-acetolactate + NADPH + H(+). The enzyme catalyses (2R,3R)-2,3-dihydroxy-3-methylpentanoate + NADP(+) = (S)-2-ethyl-2-hydroxy-3-oxobutanoate + NADPH + H(+). It participates in amino-acid biosynthesis; L-isoleucine biosynthesis; L-isoleucine from 2-oxobutanoate: step 2/4. Its pathway is amino-acid biosynthesis; L-valine biosynthesis; L-valine from pyruvate: step 2/4. Its function is as follows. Involved in the biosynthesis of branched-chain amino acids (BCAA). Catalyzes an alkyl-migration followed by a ketol-acid reduction of (S)-2-acetolactate (S2AL) to yield (R)-2,3-dihydroxy-isovalerate. In the isomerase reaction, S2AL is rearranged via a Mg-dependent methyl migration to produce 3-hydroxy-3-methyl-2-ketobutyrate (HMKB). In the reductase reaction, this 2-ketoacid undergoes a metal-dependent reduction by NADPH to yield (R)-2,3-dihydroxy-isovalerate. The chain is Ketol-acid reductoisomerase (NADP(+)) from Escherichia coli O8 (strain IAI1).